Here is a 157-residue protein sequence, read N- to C-terminus: Serine-protein kinase RsbW (157 aa).

This sequence belongs to the anti-sigma-factor family.

The enzyme catalyses L-seryl-[protein] + ATP = O-phospho-L-seryl-[protein] + ADP + H(+). It carries out the reaction L-threonyl-[protein] + ATP = O-phospho-L-threonyl-[protein] + ADP + H(+). Its function is as follows. Negative regulator of sigma-B activity. Phosphorylates and inactivates its specific antagonist protein, RsbV. Upon phosphorylation of RsbV, RsbW is released and binds to sigma-B, thereby blocking its ability to form an RNA polymerase holoenzyme (E-sigma-B). In Listeria monocytogenes serotype 4b (strain CLIP80459), this protein is Serine-protein kinase RsbW.